The sequence spans 366 residues: Putative type II methyltransferase M.MjaORF1200P (366 aa).

Residues 5–366 (LKFIDLFCGC…IARVIKENLK (362 aa)) form the SAM-dependent MTase C5-type domain. C133 is an active-site residue.

The protein belongs to the class I-like SAM-binding methyltransferase superfamily. C5-methyltransferase family.

It catalyses the reaction a 2'-deoxycytidine in DNA + S-adenosyl-L-methionine = a 5-methyl-2'-deoxycytidine in DNA + S-adenosyl-L-homocysteine + H(+). A putative methylase that probably protects DNA from cleavage by the MjaORF1200P endonuclease. In Methanocaldococcus jannaschii (strain ATCC 43067 / DSM 2661 / JAL-1 / JCM 10045 / NBRC 100440) (Methanococcus jannaschii), this protein is Putative type II methyltransferase M.MjaORF1200P.